A 774-amino-acid chain; its full sequence is Subtilisin-like protease SBT3.5 (774 aa).

The signal sequence occupies residues 1 to 23 (MRNCRVLLVLVLSLVIVLNVVRA). The propeptide at 24 to 108 (SDESKVHIVY…VMADSFYELA (85 aa)) is removed in mature form. The region spanning 29-108 (VHIVYLGEKQ…VMADSFYELA (80 aa)) is the Inhibitor I9 domain. A Peptidase S8 domain is found at 112-621 (TWDYLGLSVA…GGIVNPEKAA (510 aa)). N-linked (GlcNAc...) asparagine glycosylation occurs at N128. The active-site Charge relay system is the D142. N201 is a glycosylation site (N-linked (GlcNAc...) asparagine). H217 functions as the Charge relay system in the catalytic mechanism. Residues N232, N394, N409, and N539 are each glycosylated (N-linked (GlcNAc...) asparagine). A PA domain is found at 383–478 (SLVYPENAGF…ELGTDVLLYI (96 aa)). S552 acts as the Charge relay system in catalysis. 4 N-linked (GlcNAc...) asparagine glycosylation sites follow: N644, N654, N725, and N755.

Belongs to the peptidase S8 family. In terms of tissue distribution, expressed in roots, leaves, stems, flower buds, developing siliques and mature seeds.

It is found in the secreted. Its subcellular location is the cell wall. In terms of biological role, serine protease that cleaves the pectin methylesterase 17 (PME17) protein to release the PME17 mature form in the apoplasm. The chain is Subtilisin-like protease SBT3.5 from Arabidopsis thaliana (Mouse-ear cress).